The primary structure comprises 692 residues: Serine/threonine-protein kinase Nek8 (692 aa).

The Protein kinase domain maps to 4 to 258 (YERIRVVGRG…LSHIMAQPLC (255 aa)). Residues 10–18 (VGRGAFGIV) and K33 contribute to the ATP site. Catalysis depends on D128, which acts as the Proton acceptor. T162 carries the post-translational modification Phosphothreonine; by autocatalysis. Residues 277–301 (AEKSVAPSNTGSRTTSVRCRGIPRG) form a disordered region. The span at 282 to 293 (APSNTGSRTTSV) shows a compositional bias: polar residues. RCC1 repeat units follow at residues 312–350 (SSVY…VTRS), 410–461 (GIIM…LSTE), 462–513 (RELF…LTVP), 580–631 (GDCY…IGAE), and 632–684 (SEVY…AVRS).

It belongs to the protein kinase superfamily. NEK Ser/Thr protein kinase family. NIMA subfamily. As to quaternary structure, interacts with PKD2; may regulate PKD2 targeting to the cilium. Interacts with ANKS6. Component of a complex containing at least ANKS6, INVS, NEK8 and NPHP3. ANKS6 may organize complex assembly by linking INVS and NPHP3 to NEK8 and INVS may target the complex to the proximal ciliary axoneme. Interacts with ANKS3. The cofactor is Mg(2+). In terms of tissue distribution, highest expression in thyroid, adrenal gland and skin. Low levels in spleen, colon and uterus. Overexpressed in breast tumors, with highest expression in infiltrating ductal carcinomas and moderate levels in mucinous adenocarcinoma.

It is found in the cytoplasm. It localises to the cytoskeleton. The protein localises to the cell projection. Its subcellular location is the cilium. The protein resides in the microtubule organizing center. It is found in the centrosome. It localises to the cilium axoneme. It catalyses the reaction L-seryl-[protein] + ATP = O-phospho-L-seryl-[protein] + ADP + H(+). The catalysed reaction is L-threonyl-[protein] + ATP = O-phospho-L-threonyl-[protein] + ADP + H(+). Functionally, required for renal tubular integrity. May regulate local cytoskeletal structure in kidney tubule epithelial cells. May regulate ciliary biogenesis through targeting of proteins to the cilia. Plays a role in organogenesis, and is involved in the regulation of the Hippo signaling pathway. This chain is Serine/threonine-protein kinase Nek8 (NEK8), found in Homo sapiens (Human).